Consider the following 343-residue polypeptide: Cytoplasmic tRNA 2-thiolation protein 1 (343 aa).

The protein belongs to the TtcA family. CTU1/NCS6/ATPBD3 subfamily.

The protein localises to the cytoplasm. The protein operates within tRNA modification; 5-methoxycarbonylmethyl-2-thiouridine-tRNA biosynthesis. Plays a central role in 2-thiolation of mcm(5)S(2)U at tRNA wobble positions of tRNA(Lys), tRNA(Glu) and tRNA(Gln). Directly binds tRNAs and probably acts by catalyzing adenylation of tRNAs, an intermediate required for 2-thiolation. It is unclear whether it acts as a sulfurtransferase that transfers sulfur from thiocarboxylated URM1 onto the uridine of tRNAs at wobble position. The sequence is that of Cytoplasmic tRNA 2-thiolation protein 1 from Drosophila virilis (Fruit fly).